The primary structure comprises 58 residues: Large ribosomal subunit protein bL32 (58 aa).

This sequence belongs to the bacterial ribosomal protein bL32 family.

This Thermobifida fusca (strain YX) protein is Large ribosomal subunit protein bL32.